A 259-amino-acid chain; its full sequence is Undecaprenyl-diphosphatase (259 aa).

Transmembrane regions (helical) follow at residues 1–21, 40–60, 75–95, 101–121, 179–199, 206–226, and 239–259; these read MEIF…FLPI, QITL…IIFW, WLTI…ILFE, LFSS…LLYL, SFLL…KDAL, LTWL…YFAI, and TVFA…AGIF.

This sequence belongs to the UppP family.

The protein localises to the cell inner membrane. It catalyses the reaction di-trans,octa-cis-undecaprenyl diphosphate + H2O = di-trans,octa-cis-undecaprenyl phosphate + phosphate + H(+). Functionally, catalyzes the dephosphorylation of undecaprenyl diphosphate (UPP). Confers resistance to bacitracin. This is Undecaprenyl-diphosphatase from Halothermothrix orenii (strain H 168 / OCM 544 / DSM 9562).